The chain runs to 285 residues: 4-diphosphocytidyl-2-C-methyl-D-erythritol kinase (285 aa).

Lys-12 is an active-site residue. 95 to 105 (PMGGGVGGGSS) contributes to the ATP binding site. Asp-137 is an active-site residue.

Belongs to the GHMP kinase family. IspE subfamily.

It catalyses the reaction 4-CDP-2-C-methyl-D-erythritol + ATP = 4-CDP-2-C-methyl-D-erythritol 2-phosphate + ADP + H(+). It participates in isoprenoid biosynthesis; isopentenyl diphosphate biosynthesis via DXP pathway; isopentenyl diphosphate from 1-deoxy-D-xylulose 5-phosphate: step 3/6. Catalyzes the phosphorylation of the position 2 hydroxy group of 4-diphosphocytidyl-2C-methyl-D-erythritol. The polypeptide is 4-diphosphocytidyl-2-C-methyl-D-erythritol kinase (Actinobacillus pleuropneumoniae serotype 7 (strain AP76)).